A 499-amino-acid polypeptide reads, in one-letter code: U4/U6 small nuclear ribonucleoprotein Prp31 (499 aa).

The segment at 1 to 37 is disordered; that stretch reads MSLADELLADLEEAAEEEEGGSYGEEEEEPAIEDVQE. Acidic residues predominate over residues 7–37; that stretch reads LLADLEEAAEEEEGGSYGEEEEEPAIEDVQE. Coiled coils occupy residues 85 to 120 and 181 to 215; these read EAAPEYRVIVDANNLTVEIENELNIIHKFIRDKYSK and EEELERLEEACDMALELNASKHRIYEYVESRMSFI. Positions 215–333 constitute a Nop domain; the sequence is IAPNLSIIIG…IERKFDKWQE (119 aa). The segment at 334-357 is disordered; that stretch reads PPPVKQVKPLPAPLDGQRKKRGGR. Residues 351–364 carry the Nuclear localization signal (NLS) motif; the sequence is RKKRGGRRYRKMKE. Phosphoserine occurs at positions 379, 395, and 432. Lysine 438 carries the N6-acetyllysine modification. Residue serine 439 is modified to Phosphoserine. Threonine 440 carries the phosphothreonine modification. The residue at position 450 (serine 450) is a Phosphoserine. Residue threonine 455 is modified to Phosphothreonine. Glycyl lysine isopeptide (Lys-Gly) (interchain with G-Cter in SUMO2) cross-links involve residues lysine 471 and lysine 478.

Belongs to the PRP31 family. In terms of assembly, identified in the spliceosome B complex. Component of the U4/U6-U5 tri-snRNP complex composed of the U4, U6 and U5 snRNAs and at least PRPF3, PRPF4, PRPF6, PRPF8, PRPF31, SNRNP200, TXNL4A, SNRNP40, DDX23, CD2BP2, PPIH, SNU13, EFTUD2, SART1 and USP39. Interacts with a complex formed by SNU13 and U4 snRNA, but not with SNU13 or U4 snRNA alone. The complex formed by SNU13 and PRPF31 also binds U4atac snRNA, a characteristic component of specific, less abundant spliceosomal complexes. Interacts with PRPF6/U5 snRNP-associated 102 kDa protein. Component of some MLL1/MLL complex, at least composed of the core components KMT2A/MLL1, ASH2L, HCFC1/HCF1, WDR5 and RBBP5, as well as the facultative components BACC1, CHD8, E2F6, HSP70, INO80C, KANSL1, LAS1L, MAX, MCRS1, MGA, KAT8/MOF, PELP1, PHF20, PRP31, RING2, RUVB1/TIP49A, RUVB2/TIP49B, SENP3, TAF1, TAF4, TAF6, TAF7, TAF9 and TEX10. Interacts (via its NLS) with CTNNBL1. Interacts with USH1G. Phosphorylated by PRP4K during spliceosome assembly. As to expression, ubiquitously expressed.

The protein resides in the nucleus. It localises to the nucleus speckle. It is found in the cajal body. Involved in pre-mRNA splicing as component of the spliceosome. Required for the assembly of the U4/U5/U6 tri-snRNP complex, one of the building blocks of the spliceosome. This is U4/U6 small nuclear ribonucleoprotein Prp31 from Homo sapiens (Human).